A 720-amino-acid chain; its full sequence is Putative fatty acid oxidation complex trifunctional enzyme (720 aa).

A 3-hydroxyacyl-CoA dehydrogenase region spans residues 1–384 (MQNEIKKVCV…SWKYGPFELL (384 aa)). The segment at 453-720 (FVITTKMNCL…TIEKLKAIVK (268 aa)) is enoyl-CoA hydratase/isomerase.

It in the N-terminal section; belongs to the 3-hydroxyacyl-CoA dehydrogenase family. In the C-terminal section; belongs to the enoyl-CoA hydratase/isomerase family.

The catalysed reaction is a (3S)-3-hydroxyacyl-CoA + NAD(+) = a 3-oxoacyl-CoA + NADH + H(+). It catalyses the reaction a (3S)-3-hydroxyacyl-CoA = a (2E)-enoyl-CoA + H2O. It carries out the reaction a 4-saturated-(3S)-3-hydroxyacyl-CoA = a (3E)-enoyl-CoA + H2O. The enzyme catalyses a (3Z)-enoyl-CoA = a 4-saturated (2E)-enoyl-CoA. The catalysed reaction is a (3E)-enoyl-CoA = a 4-saturated (2E)-enoyl-CoA. The chain is Putative fatty acid oxidation complex trifunctional enzyme from Rickettsia felis (strain ATCC VR-1525 / URRWXCal2) (Rickettsia azadi).